The primary structure comprises 252 residues: Enolase-phosphatase E1 (252 aa).

Mg(2+)-binding residues include D14 and E16. Substrate contacts are provided by residues 142–143 (SS) and K176. D201 is a binding site for Mg(2+).

This sequence belongs to the HAD-like hydrolase superfamily. MasA/MtnC family. As to quaternary structure, monomer. Requires Mg(2+) as cofactor.

The protein resides in the cytoplasm. Its subcellular location is the nucleus. It catalyses the reaction 5-methylsulfanyl-2,3-dioxopentyl phosphate + H2O = 1,2-dihydroxy-5-(methylsulfanyl)pent-1-en-3-one + phosphate. The protein operates within amino-acid biosynthesis; L-methionine biosynthesis via salvage pathway; L-methionine from S-methyl-5-thio-alpha-D-ribose 1-phosphate: step 3/6. Its pathway is amino-acid biosynthesis; L-methionine biosynthesis via salvage pathway; L-methionine from S-methyl-5-thio-alpha-D-ribose 1-phosphate: step 4/6. Functionally, bifunctional enzyme that catalyzes the enolization of 2,3-diketo-5-methylthiopentyl-1-phosphate (DK-MTP-1-P) into the intermediate 2-hydroxy-3-keto-5-methylthiopentenyl-1-phosphate (HK-MTPenyl-1-P), which is then dephosphorylated to form the acireductone 1,2-dihydroxy-3-keto-5-methylthiopentene (DHK-MTPene). In Drosophila ananassae (Fruit fly), this protein is Enolase-phosphatase E1.